We begin with the raw amino-acid sequence, 487 residues long: GTPase Der (487 aa).

Positions 1-20 (MAKAVRKSNSEETVPIKAPR) are disordered. EngA-type G domains lie at 28–197 (PVVS…SSKP) and 225–401 (FRLA…SRSR). GTP-binding positions include 34–41 (GRQNVGKS), 83–87 (DTPGL), 149–152 (NKAD), 231–238 (GKPNSGKS), 278–282 (DTAGI), and 343–346 (NKWD). The KH-like domain maps to 402 to 486 (RKVSTSELNK…PVRLEFRSDR (85 aa)).

This sequence belongs to the TRAFAC class TrmE-Era-EngA-EngB-Septin-like GTPase superfamily. EngA (Der) GTPase family. Associates with the 50S ribosomal subunit.

In terms of biological role, GTPase that plays an essential role in the late steps of ribosome biogenesis. The sequence is that of GTPase Der from Leptospira borgpetersenii serovar Hardjo-bovis (strain L550).